Consider the following 78-residue polypeptide: MKNGIHPEYKKLLIKVGSNIFETMSTHPIGEILMDVDFRKHPAWNKDSGNVVNQSNKSVSDFNKRFSGLSFDSKKEAS.

It belongs to the bacterial ribosomal protein bL31 family. Type A subfamily. As to quaternary structure, part of the 50S ribosomal subunit.

Functionally, binds the 23S rRNA. The polypeptide is Large ribosomal subunit protein bL31 (rpmE) (Rickettsia typhi (strain ATCC VR-144 / Wilmington)).